An 892-amino-acid polypeptide reads, in one-letter code: Translation initiation factor IF-2 (892 aa).

Disordered regions lie at residues 144–176 (QQRL…QKTE) and 189–298 (SNSV…SGAH). Low complexity predominate over residues 207-219 (LPRTVRPTPAARP). In terms of domain architecture, tr-type G spans 391–560 (PRPPVVTIMG…SIQAEVLELK (170 aa)). GTP is bound by residues 400 to 407 (GHVDHGKT), 446 to 450 (DTPGH), and 500 to 503 (SKID).

The protein belongs to the TRAFAC class translation factor GTPase superfamily. Classic translation factor GTPase family. IF-2 subfamily.

The protein resides in the cytoplasm. Its function is as follows. One of the essential components for the initiation of protein synthesis. Protects formylmethionyl-tRNA from spontaneous hydrolysis and promotes its binding to the 30S ribosomal subunits. Also involved in the hydrolysis of GTP during the formation of the 70S ribosomal complex. The chain is Translation initiation factor IF-2 from Xylella fastidiosa (strain M12).